The primary structure comprises 448 residues: Phosphoglucosamine mutase (448 aa).

Serine 100 functions as the Phosphoserine intermediate in the catalytic mechanism. Residues serine 100, aspartate 240, aspartate 242, and aspartate 244 each contribute to the Mg(2+) site. Serine 100 carries the phosphoserine modification.

It belongs to the phosphohexose mutase family. Mg(2+) serves as cofactor. Activated by phosphorylation.

The catalysed reaction is alpha-D-glucosamine 1-phosphate = D-glucosamine 6-phosphate. In terms of biological role, catalyzes the conversion of glucosamine-6-phosphate to glucosamine-1-phosphate. This chain is Phosphoglucosamine mutase, found in Bacillus velezensis (strain DSM 23117 / BGSC 10A6 / LMG 26770 / FZB42) (Bacillus amyloliquefaciens subsp. plantarum).